The following is a 199-amino-acid chain: Casparian strip membrane protein 2 (199 aa).

Topologically, residues 1-37 (MMRGSTEIDMPESSSVSKGTAPLIAAPMKEKGGYKKG) are cytoplasmic. Residues 38–58 (IAIFDFILRLAAIATALAAAA) traverse the membrane as a helical segment. The Extracellular portion of the chain corresponds to 59 to 87 (SMGTSDETLPFFTQFFQFQASYDDLPTFQ). Residues 88–108 (FFVIAMAIVAGYLVLSLPFSI) form a helical membrane-spanning segment. Topologically, residues 109 to 120 (VAIVRPHAAGPR) are cytoplasmic. A helical membrane pass occupies residues 121–141 (LLLIILDTVALTLNTAAGAAA). The Extracellular segment spans residues 142–173 (AAIVYLAHNGNSSTNWLAICQQFGDFCQKNSG). Asn-152 carries N-linked (GlcNAc...) asparagine glycosylation. A helical membrane pass occupies residues 174–194 (AVVASFITVVIFVFLLVLSAF). Topologically, residues 195–199 (ALRRH) are cytoplasmic.

The protein belongs to the Casparian strip membrane proteins (CASP) family. In terms of assembly, homodimer and heterodimers.

The protein resides in the cell membrane. Its function is as follows. Regulates membrane-cell wall junctions and localized cell wall deposition. Required for establishment of the Casparian strip membrane domain (CSD) and the subsequent formation of Casparian strips, a cell wall modification of the root endodermis that determines an apoplastic barrier between the intraorganismal apoplasm and the extraorganismal apoplasm and prevents lateral diffusion. The chain is Casparian strip membrane protein 2 from Populus trichocarpa (Western balsam poplar).